A 1378-amino-acid polypeptide reads, in one-letter code: DNA-directed RNA polymerase subunit beta (1378 aa).

This sequence belongs to the RNA polymerase beta chain family. In terms of assembly, the RNAP catalytic core consists of 2 alpha, 1 beta, 1 beta' and 1 omega subunit. When a sigma factor is associated with the core the holoenzyme is formed, which can initiate transcription.

It carries out the reaction RNA(n) + a ribonucleoside 5'-triphosphate = RNA(n+1) + diphosphate. Its function is as follows. DNA-dependent RNA polymerase catalyzes the transcription of DNA into RNA using the four ribonucleoside triphosphates as substrates. This Sorangium cellulosum (strain So ce56) (Polyangium cellulosum (strain So ce56)) protein is DNA-directed RNA polymerase subunit beta.